The following is a 669-amino-acid chain: DNA mismatch repair protein MutL (669 aa).

2 disordered regions span residues 354-402 (NRPA…ENPY) and 448-479 (TVSH…PLES). Residues 448 to 468 (TVSHDSPPNRTAPDATTSSSK) are compositionally biased toward polar residues.

This sequence belongs to the DNA mismatch repair MutL/HexB family.

In terms of biological role, this protein is involved in the repair of mismatches in DNA. It is required for dam-dependent methyl-directed DNA mismatch repair. May act as a 'molecular matchmaker', a protein that promotes the formation of a stable complex between two or more DNA-binding proteins in an ATP-dependent manner without itself being part of a final effector complex. The protein is DNA mismatch repair protein MutL of Pectobacterium carotovorum subsp. carotovorum (strain PC1).